Here is a 239-residue protein sequence, read N- to C-terminus: Geranylgeranylglyceryl phosphate synthase (239 aa).

Positions 19 and 48 each coordinate Mg(2+). Sn-glycerol 1-phosphate-binding positions include 167–173 (YLEAGSG), 197–198 (GG), and 219–220 (GT).

Belongs to the GGGP/HepGP synthase family. Group II subfamily. Mg(2+) is required as a cofactor.

It is found in the cytoplasm. The enzyme catalyses sn-glycerol 1-phosphate + (2E,6E,10E)-geranylgeranyl diphosphate = sn-3-O-(geranylgeranyl)glycerol 1-phosphate + diphosphate. It functions in the pathway membrane lipid metabolism; glycerophospholipid metabolism. Functionally, prenyltransferase that catalyzes the transfer of the geranylgeranyl moiety of geranylgeranyl diphosphate (GGPP) to the C3 hydroxyl of sn-glycerol-1-phosphate (G1P). This reaction is the first ether-bond-formation step in the biosynthesis of archaeal membrane lipids. The sequence is that of Geranylgeranylglyceryl phosphate synthase from Methanopyrus kandleri (strain AV19 / DSM 6324 / JCM 9639 / NBRC 100938).